We begin with the raw amino-acid sequence, 42 residues long: MQDVETYLSTAPVLATLWFGFLAGLLIEINRFFPDALVFPSL.

A helical transmembrane segment spans residues 7 to 27; the sequence is YLSTAPVLATLWFGFLAGLLI.

The protein belongs to the PsaJ family.

The protein localises to the plastid. The protein resides in the chloroplast thylakoid membrane. Its function is as follows. May help in the organization of the PsaE and PsaF subunits. The sequence is that of Photosystem I reaction center subunit IX from Huperzia lucidula (Shining clubmoss).